The primary structure comprises 80 residues: Regulatory protein HrpD6 (80 aa).

In terms of biological role, involved in the regulation of several genes of the hrp-hrc-hpa cluster, which encodes a type III secretion system (T3SS). Upregulates the expression of hpa2, hpa1 and hpaB and partially controls the expression of hrcC and hrcT. Controls the secretion of the T3SS TAL effector AvrXa27. Also regulates the expression of several HrpX-regulated protein (Xrp) genes. Has no influence on hrpG or hrpX expression. The chain is Regulatory protein HrpD6 from Xanthomonas oryzae pv. oryzicola.